Consider the following 867-residue polypeptide: Protein translocase subunit SecA 1 (867 aa).

Residues Gln86, 104–108 (GEGKT), and Asp493 contribute to the ATP site.

This sequence belongs to the SecA family. In terms of assembly, monomer and homodimer. Part of the essential Sec protein translocation apparatus which comprises SecA, SecYEG and auxiliary proteins SecDF. Other proteins may also be involved.

It localises to the cell membrane. It is found in the cytoplasm. It catalyses the reaction ATP + H2O + cellular proteinSide 1 = ADP + phosphate + cellular proteinSide 2.. In terms of biological role, part of the Sec protein translocase complex. Interacts with the SecYEG preprotein conducting channel. Has a central role in coupling the hydrolysis of ATP to the transfer of proteins into and across the cell membrane, serving as an ATP-driven molecular motor driving the stepwise translocation of polypeptide chains across the membrane. The chain is Protein translocase subunit SecA 1 from Corynebacterium jeikeium (strain K411).